The chain runs to 559 residues: Formate--tetrahydrofolate ligase (559 aa).

67 to 74 (TPAGEGKS) is a binding site for ATP.

It belongs to the formate--tetrahydrofolate ligase family.

It carries out the reaction (6S)-5,6,7,8-tetrahydrofolate + formate + ATP = (6R)-10-formyltetrahydrofolate + ADP + phosphate. The protein operates within one-carbon metabolism; tetrahydrofolate interconversion. In Lactobacillus delbrueckii subsp. bulgaricus (strain ATCC BAA-365 / Lb-18), this protein is Formate--tetrahydrofolate ligase.